We begin with the raw amino-acid sequence, 363 residues long: Isopentenyl-diphosphate delta-isomerase (363 aa).

15 to 16 (RK) is a substrate binding site. FMN is bound by residues S73, 74-76 (SMT), S104, and N133. Residue 104 to 106 (SMR) coordinates substrate. Residue Q168 participates in substrate binding. E169 is a binding site for Mg(2+). Residues K200, T230, and 313–314 (AG) contribute to the FMN site.

Belongs to the IPP isomerase type 2 family. As to quaternary structure, homooctamer. Dimer of tetramers. The cofactor is FMN. NADPH serves as cofactor. Mg(2+) is required as a cofactor.

The protein localises to the cytoplasm. It catalyses the reaction isopentenyl diphosphate = dimethylallyl diphosphate. Its function is as follows. Involved in the biosynthesis of isoprenoids. Catalyzes the 1,3-allylic rearrangement of the homoallylic substrate isopentenyl (IPP) to its allylic isomer, dimethylallyl diphosphate (DMAPP). This Chlorobium phaeobacteroides (strain DSM 266 / SMG 266 / 2430) protein is Isopentenyl-diphosphate delta-isomerase.